Here is a 149-residue protein sequence, read N- to C-terminus: Large ribosomal subunit protein bL9 (149 aa).

Belongs to the bacterial ribosomal protein bL9 family.

Its function is as follows. Binds to the 23S rRNA. The sequence is that of Large ribosomal subunit protein bL9 from Geobacillus sp. (strain WCH70).